The chain runs to 588 residues: Proline--tRNA ligase (588 aa).

This sequence belongs to the class-II aminoacyl-tRNA synthetase family. ProS type 1 subfamily. In terms of assembly, homodimer.

It is found in the cytoplasm. It carries out the reaction tRNA(Pro) + L-proline + ATP = L-prolyl-tRNA(Pro) + AMP + diphosphate. In terms of biological role, catalyzes the attachment of proline to tRNA(Pro) in a two-step reaction: proline is first activated by ATP to form Pro-AMP and then transferred to the acceptor end of tRNA(Pro). As ProRS can inadvertently accommodate and process non-cognate amino acids such as alanine and cysteine, to avoid such errors it has two additional distinct editing activities against alanine. One activity is designated as 'pretransfer' editing and involves the tRNA(Pro)-independent hydrolysis of activated Ala-AMP. The other activity is designated 'posttransfer' editing and involves deacylation of mischarged Ala-tRNA(Pro). The misacylated Cys-tRNA(Pro) is not edited by ProRS. The protein is Proline--tRNA ligase of Corynebacterium glutamicum (strain R).